The chain runs to 229 residues: 1-Cys peroxiredoxin PER1 (229 aa).

The Thioredoxin domain occupies leucine 4 to threonine 173. The active-site Cysteine sulfenic acid (-SOH) intermediate is cysteine 46. The short motif at arginine 205–lysine 228 is the Bipartite nuclear localization signal element.

The protein belongs to the peroxiredoxin family. Prx6 subfamily.

It localises to the nucleus. It is found in the cytoplasm. It catalyses the reaction a hydroperoxide + [thioredoxin]-dithiol = an alcohol + [thioredoxin]-disulfide + H2O. Thiol-specific peroxidase that catalyzes the reduction of hydrogen peroxide and organic hydroperoxides to water and alcohols, respectively. Seems to contribute to the inhibition of germination during stress. This Zea mays (Maize) protein is 1-Cys peroxiredoxin PER1 (PER1).